The primary structure comprises 181 residues: ADP-ribosylation factor 1-like 2 (181 aa).

Residue glycine 2 is the site of N-myristoyl glycine attachment. The segment at 3–16 is important for the stable binding to the membranes; the sequence is NVFGSLFKGLFGKK. Residues 24-32, 126-129, and alanine 160 each bind GTP; these read GLDAAGKTT and NKQD.

The protein belongs to the small GTPase superfamily. Arf family.

It localises to the golgi apparatus membrane. The enzyme catalyses GTP + H2O = GDP + phosphate + H(+). With respect to regulation, alternates between an inactive GDP-bound form and an active GTP-bound form. Activated by a guanine nucleotide-exchange factor (GEF) and inactivated by GTPase-activating protein (GAP). In terms of biological role, small GTPase involved in protein trafficking between different compartments. Modulates vesicle budding and uncoating within the Golgi complex. In its GTP-bound form, triggers the recruitment of coatomer proteins to the Golgi membrane. The hydrolysis of ARF1-bound GTP, which is mediated by ARFGAPs proteins, is required for dissociation of coat proteins from Golgi membranes and vesicles. Involved in endoplasmic reticulum dynamics during embryogenesis. Also required for adult germline function. Plays a role in cell shedding during embryogenesis probably by promoting the endocytosis of cell adhesion molecules. During neurogenesis, involved in cell autonomous Q.p neuroblast asymmetric divisions that generate one precursor cell and one apoptotic cell, probably by controlling endocytosis. Plays a role in maintaining mitochondrial morphology. The polypeptide is ADP-ribosylation factor 1-like 2 (arf-1.2) (Caenorhabditis briggsae).